The sequence spans 726 residues: Catalase-peroxidase (726 aa).

The tryptophyl-tyrosyl-methioninium (Trp-Tyr) (with M-250) cross-link spans Trp-96–Tyr-224. Residue His-97 is the Proton acceptor of the active site. A cross-link (tryptophyl-tyrosyl-methioninium (Tyr-Met) (with W-96)) is located at residues Tyr-224–Met-250. His-265 lines the heme b pocket.

This sequence belongs to the peroxidase family. Peroxidase/catalase subfamily. In terms of assembly, homodimer or homotetramer. Heme b is required as a cofactor. In terms of processing, formation of the three residue Trp-Tyr-Met cross-link is important for the catalase, but not the peroxidase activity of the enzyme.

The catalysed reaction is H2O2 + AH2 = A + 2 H2O. It catalyses the reaction 2 H2O2 = O2 + 2 H2O. Its function is as follows. Bifunctional enzyme with both catalase and broad-spectrum peroxidase activity. The sequence is that of Catalase-peroxidase from Vibrio campbellii (strain ATCC BAA-1116).